Here is a 93-residue protein sequence, read N- to C-terminus: CRISPR-associated endoribonuclease Cas2 1 (93 aa).

Residue Asp-8 participates in Mg(2+) binding.

This sequence belongs to the CRISPR-associated endoribonuclease Cas2 protein family. Homodimer, forms a heterotetramer with a Cas1 homodimer. Mg(2+) serves as cofactor.

Functionally, CRISPR (clustered regularly interspaced short palindromic repeat), is an adaptive immune system that provides protection against mobile genetic elements (viruses, transposable elements and conjugative plasmids). CRISPR clusters contain sequences complementary to antecedent mobile elements and target invading nucleic acids. CRISPR clusters are transcribed and processed into CRISPR RNA (crRNA). Functions as a ssRNA-specific endoribonuclease. Involved in the integration of spacer DNA into the CRISPR cassette. The polypeptide is CRISPR-associated endoribonuclease Cas2 1 (Chloroflexus aurantiacus (strain ATCC 29366 / DSM 635 / J-10-fl)).